The sequence spans 483 residues: MHQMTLAEIARGLADKKFSSEELTRVLLSRIATLDPQLNSFISLTEDLAITQAQAADARRAAGENGPLLGAPLAHKDLFCTQGIRTSCGSLMLDNFKAPYDATVVSRLASAGTVTLGKTNMDEFAMGSANESSHYGAVKNPWNLECVPGGSSGGSAAAVAARLLPAATGTDTGGSIRQPAALTNLTGLKPTYGRVSRWGMIAYASSLDQAGPMARTAEDCALLLQGMAGFDPQDSTSIDEPVPDYSASLNTSLKGLRIGVPKEYFSAGLDPRIAQLVHESVRELEKLGAIVKEVSLPNLQHAIPAYYVIAPAEASSNLSRFDGVRFGYRCEDPKDLTDLYKRSRAEGFGPEVQRRIMVGAYALSAGYYDAYYLQAQKIRRLIKNDFMNAFADVDVILGPTTPNPAWKIGAKTHDPIAEYLEDFYTITANLAGLPGLSMPAGFVDGLPVGVQLLAPYFQEGRLLNVAHQYQQVTDWHTRAPEGF.

Active-site charge relay system residues include Lys-76 and Ser-151. The Acyl-ester intermediate role is filled by Ser-175.

It belongs to the amidase family. GatA subfamily. As to quaternary structure, heterotrimer of A, B and C subunits.

The enzyme catalyses L-glutamyl-tRNA(Gln) + L-glutamine + ATP + H2O = L-glutaminyl-tRNA(Gln) + L-glutamate + ADP + phosphate + H(+). Its function is as follows. Allows the formation of correctly charged Gln-tRNA(Gln) through the transamidation of misacylated Glu-tRNA(Gln) in organisms which lack glutaminyl-tRNA synthetase. The reaction takes place in the presence of glutamine and ATP through an activated gamma-phospho-Glu-tRNA(Gln). The protein is Glutamyl-tRNA(Gln) amidotransferase subunit A of Pseudomonas syringae pv. syringae (strain B728a).